Reading from the N-terminus, the 175-residue chain is Inorganic pyrophosphatase (175 aa).

Lys-30, Arg-44, and Tyr-56 together coordinate substrate. Mg(2+) is bound by residues Asp-66, Asp-71, and Asp-103. Substrate is bound at residue Tyr-140.

It belongs to the PPase family. In terms of assembly, homohexamer. Mg(2+) is required as a cofactor.

It localises to the cytoplasm. It catalyses the reaction diphosphate + H2O = 2 phosphate + H(+). Its function is as follows. Catalyzes the hydrolysis of inorganic pyrophosphate (PPi) forming two phosphate ions. This is Inorganic pyrophosphatase from Thermus thermophilus (strain ATCC 27634 / DSM 579 / HB8).